A 258-amino-acid polypeptide reads, in one-letter code: Acyl-[acyl-carrier-protein]--UDP-N-acetylglucosamine O-acyltransferase (258 aa).

Belongs to the transferase hexapeptide repeat family. LpxA subfamily. As to quaternary structure, homotrimer.

It is found in the cytoplasm. The enzyme catalyses a (3R)-hydroxyacyl-[ACP] + UDP-N-acetyl-alpha-D-glucosamine = a UDP-3-O-[(3R)-3-hydroxyacyl]-N-acetyl-alpha-D-glucosamine + holo-[ACP]. Its pathway is glycolipid biosynthesis; lipid IV(A) biosynthesis; lipid IV(A) from (3R)-3-hydroxytetradecanoyl-[acyl-carrier-protein] and UDP-N-acetyl-alpha-D-glucosamine: step 1/6. Functionally, involved in the biosynthesis of lipid A, a phosphorylated glycolipid that anchors the lipopolysaccharide to the outer membrane of the cell. In Neisseria meningitidis serogroup B (strain ATCC BAA-335 / MC58), this protein is Acyl-[acyl-carrier-protein]--UDP-N-acetylglucosamine O-acyltransferase.